A 200-amino-acid chain; its full sequence is dITP/XTP pyrophosphatase (200 aa).

16-21 contacts substrate; it reads SNNDGK. Positions 46 and 75 each coordinate Mg(2+). Residue Asp-75 is the Proton acceptor of the active site. Substrate contacts are provided by residues Ser-76, 154 to 157, Lys-177, and 182 to 183; these read FGYD and HR.

It belongs to the HAM1 NTPase family. Homodimer. It depends on Mg(2+) as a cofactor.

The catalysed reaction is XTP + H2O = XMP + diphosphate + H(+). It catalyses the reaction dITP + H2O = dIMP + diphosphate + H(+). It carries out the reaction ITP + H2O = IMP + diphosphate + H(+). Functionally, pyrophosphatase that catalyzes the hydrolysis of nucleoside triphosphates to their monophosphate derivatives, with a high preference for the non-canonical purine nucleotides XTP (xanthosine triphosphate), dITP (deoxyinosine triphosphate) and ITP. Seems to function as a house-cleaning enzyme that removes non-canonical purine nucleotides from the nucleotide pool, thus preventing their incorporation into DNA/RNA and avoiding chromosomal lesions. The protein is dITP/XTP pyrophosphatase of Prochlorococcus marinus (strain SARG / CCMP1375 / SS120).